The following is a 64-amino-acid chain: Neurotoxin BmK-II (64 aa).

The LCN-type CS-alpha/beta domain maps to 2-64; the sequence is RDAYIAKPHN…VPIRIPGNCH (63 aa). 4 cysteine pairs are disulfide-bonded: Cys-12–Cys-63, Cys-16–Cys-36, Cys-22–Cys-46, and Cys-26–Cys-48.

It belongs to the long (4 C-C) scorpion toxin superfamily. Sodium channel inhibitor family. Alpha subfamily. Expressed by the venom gland.

The protein localises to the secreted. In terms of biological role, binds to sodium channels (Nav) and inhibits the inactivation of the activated channels, thereby blocking neuronal transmission. This toxin is active against mammals and insects. BmK-II is 6-fold less toxic than BmK-I. In Olivierus martensii (Manchurian scorpion), this protein is Neurotoxin BmK-II.